The chain runs to 361 residues: tRNA/tmRNA (uracil-C(5))-methyltransferase (361 aa).

5 residues coordinate S-adenosyl-L-methionine: Gln-185, Tyr-213, Asn-218, Glu-234, and Asp-294. Cys-319 (nucleophile) is an active-site residue. Glu-353 functions as the Proton acceptor in the catalytic mechanism.

This sequence belongs to the class I-like SAM-binding methyltransferase superfamily. RNA M5U methyltransferase family. TrmA subfamily.

It carries out the reaction uridine(54) in tRNA + S-adenosyl-L-methionine = 5-methyluridine(54) in tRNA + S-adenosyl-L-homocysteine + H(+). It catalyses the reaction uridine(341) in tmRNA + S-adenosyl-L-methionine = 5-methyluridine(341) in tmRNA + S-adenosyl-L-homocysteine + H(+). Dual-specificity methyltransferase that catalyzes the formation of 5-methyluridine at position 54 (m5U54) in all tRNAs, and that of position 341 (m5U341) in tmRNA (transfer-mRNA). The sequence is that of tRNA/tmRNA (uracil-C(5))-methyltransferase from Pseudomonas savastanoi pv. phaseolicola (strain 1448A / Race 6) (Pseudomonas syringae pv. phaseolicola (strain 1448A / Race 6)).